The chain runs to 199 residues: Fe/S biogenesis protein NfuA (199 aa).

[4Fe-4S] cluster is bound by residues cysteine 151 and cysteine 154.

The protein belongs to the NfuA family. Homodimer. It depends on [4Fe-4S] cluster as a cofactor.

Involved in iron-sulfur cluster biogenesis. Binds a 4Fe-4S cluster, can transfer this cluster to apoproteins, and thereby intervenes in the maturation of Fe/S proteins. Could also act as a scaffold/chaperone for damaged Fe/S proteins. This is Fe/S biogenesis protein NfuA from Stenotrophomonas maltophilia (strain K279a).